Consider the following 116-residue polypeptide: Ig heavy chain V region 441 (116 aa).

Residues Met-1–Cys-18 form the signal peptide. An Ig-like domain is found at Glu-19–Arg-116.

The polypeptide is Ig heavy chain V region 441 (Mus musculus (Mouse)).